The chain runs to 431 residues: Galanin-like G-protein coupled receptor npr-9 (431 aa).

At 1-34 (MEFENLTKEEMEQLQKIYDDTISFERKIGIIIPT) the chain is on the extracellular side. Residue N5 is glycosylated (N-linked (GlcNAc...) asparagine). Residues 35-55 (IFAVIILVGLVGNALVVIVAF) traverse the membrane as a helical segment. Residues 56–66 (GRQMRNSTNTL) lie on the Cytoplasmic side of the membrane. A helical membrane pass occupies residues 67-87 (IIGLAISDLMFLLLCVPFTAV). At 88-101 (DYAAPTWIFPEWTC) the chain is on the extracellular side. A disulfide bond links C101 and C182. A helical membrane pass occupies residues 102–124 (SMINFFQHTSAYCSVWTLTLMAL). Residues 125 to 143 (DRYLAVVYPVESMTLRTPR) are Cytoplasmic-facing. A helical membrane pass occupies residues 144–164 (NTVIALCFIYIIIIASQIPVG). Residues 165 to 203 (RMHGIYVYDFIMEKRSTCAILTIATAEATPTMARTYFMT) lie on the Extracellular side of the membrane. Residues 204–224 (FNVFGYVLPLGISVVLYGLML) traverse the membrane as a helical segment. Residues 225–268 (RKLWDMPRPGNSQSVGGRNLTNRDSGSSIRRRPEATAAKRKVTR) lie on the Cytoplasmic side of the membrane. Residues 235 to 252 (NSQSVGGRNLTNRDSGSS) are compositionally biased toward polar residues. Residues 235–257 (NSQSVGGRNLTNRDSGSSIRRRP) form a disordered region. The chain crosses the membrane as a helical span at residues 269–289 (LVLCVLITWALCWLPLNVCFF). Over 290–298 (MSGLAYPEP) the chain is Extracellular. A helical transmembrane segment spans residues 299 to 319 (LVISHGVIMVIVQIASQVLAY). The Cytoplasmic segment spans residues 320–431 (TNSCLNPILY…RSKSTRSYNL (112 aa)). Polar residues predominate over residues 393 to 414 (SLLKDNSSSATSVQPLRTSIQA). Positions 393–431 (SLLKDNSSSATSVQPLRTSIQAKKTKNIGRSKSTRSYNL) are disordered. Basic residues predominate over residues 415-425 (KKTKNIGRSKS).

It belongs to the G-protein coupled receptor 1 family. Exclusively expressed in the AIB interneuron.

It localises to the cell membrane. Its function is as follows. Neuropeptide that controls movement such as roaming, foraging and backwards locomotion or 'reversals' in response to environmental cues such as food availability or volatile odorants such as octanol. Antagonizes AIB interneuron activity to control bacterial colonization and may negatively regulate the expression of immunity-related genes such as pqm-1 and dod-22 in response to infection by P.aeruginosa. This Caenorhabditis elegans protein is Galanin-like G-protein coupled receptor npr-9.